A 393-amino-acid polypeptide reads, in one-letter code: E3 ubiquitin-protein transferase RMND5B (393 aa).

Met-1 is modified (N-acetylmethionine). The LisH domain maps to 116–148 (QQQILQMAIVEHLYQQGMLSVAEELCQESTLNV). One can recognise a CTLH domain in the interval 155–212 (PFLELNRILEALHEQDLGPALEWAVSHRQRLLELNSSLEFKLHRLHFIRLLAGGPAKQ). An RING-Gid-type zinc finger spans residues 338–379 (CPILRQQTSDSNPPIKLICGHVISRDALNKLINGGKLKCPYC).

Identified in the CTLH complex that contains GID4, RANBP9 and/or RANBP10, MKLN1, MAEA, RMND5A (or alternatively its paralog RMND5B), GID8, ARMC8, WDR26 and YPEL5. Within this complex, MAEA, RMND5A (or alternatively its paralog RMND5B), GID8, WDR26, and RANBP9 and/or RANBP10 form the catalytic core, while GID4, MKLN1, ARMC8 and YPEL5 have ancillary roles.

It is found in the cytoplasm. The protein localises to the cytosol. The catalysed reaction is S-ubiquitinyl-[E2 ubiquitin-conjugating enzyme]-L-cysteine + [acceptor protein]-L-lysine = [E2 ubiquitin-conjugating enzyme]-L-cysteine + N(6)-ubiquitinyl-[acceptor protein]-L-lysine.. Its function is as follows. Core component of the CTLH E3 ubiquitin-protein ligase complex that selectively accepts ubiquitin from UBE2H and mediates ubiquitination and subsequent proteasomal degradation of the transcription factor HBP1. MAEA and RMND5A are both required for catalytic activity of the CTLH E3 ubiquitin-protein ligase complex. Catalytic activity of the complex is required for normal cell proliferation. The CTLH E3 ubiquitin-protein ligase complex is not required for the degradation of enzymes involved in gluconeogenesis, such as FBP1. The chain is E3 ubiquitin-protein transferase RMND5B (RMND5B) from Homo sapiens (Human).